A 168-amino-acid chain; its full sequence is UPF0178 protein RBAM_023530 (168 aa).

This sequence belongs to the UPF0178 family.

The protein is UPF0178 protein RBAM_023530 of Bacillus velezensis (strain DSM 23117 / BGSC 10A6 / LMG 26770 / FZB42) (Bacillus amyloliquefaciens subsp. plantarum).